A 428-amino-acid polypeptide reads, in one-letter code: Histidine--tRNA ligase (428 aa).

This sequence belongs to the class-II aminoacyl-tRNA synthetase family. As to quaternary structure, homodimer.

The protein resides in the cytoplasm. It catalyses the reaction tRNA(His) + L-histidine + ATP = L-histidyl-tRNA(His) + AMP + diphosphate + H(+). This chain is Histidine--tRNA ligase, found in Azotobacter vinelandii (strain DJ / ATCC BAA-1303).